Consider the following 181-residue polypeptide: Adenine phosphoribosyltransferase (181 aa).

It belongs to the purine/pyrimidine phosphoribosyltransferase family. In terms of assembly, homodimer.

The protein localises to the cytoplasm. It carries out the reaction AMP + diphosphate = 5-phospho-alpha-D-ribose 1-diphosphate + adenine. Its pathway is purine metabolism; AMP biosynthesis via salvage pathway; AMP from adenine: step 1/1. Functionally, catalyzes a salvage reaction resulting in the formation of AMP, that is energically less costly than de novo synthesis. The polypeptide is Adenine phosphoribosyltransferase (Shewanella woodyi (strain ATCC 51908 / MS32)).